The chain runs to 342 residues: Cytochrome f (342 aa).

Residues Met1 to Ala28 form the signal peptide. 3 residues coordinate heme: Cys48, Cys51, and His52. The chain crosses the membrane as a helical span at residues Val305 to Lys325.

Belongs to the cytochrome f family. As to quaternary structure, the 4 large subunits of the cytochrome b6-f complex are cytochrome b6, subunit IV (17 kDa polypeptide, PetD), cytochrome f and the Rieske protein, while the 4 small subunits are PetG, PetL, PetM and PetN. The complex functions as a dimer. It depends on heme as a cofactor.

Its subcellular location is the cell inner membrane. Functionally, component of the cytochrome b6-f complex, which mediates electron transfer between photosystem II (PSII) and photosystem I (PSI), cyclic electron flow around PSI, and state transitions. This is Cytochrome f (petA) from Gloeobacter violaceus (strain ATCC 29082 / PCC 7421).